Here is a 156-residue protein sequence, read N- to C-terminus: MTNTATSVELDLQVAVEGVELPSVQEMELWVKTALRDSMDQAELTIRIVDVAESQMLNSTYRGKDKPTNVLSFPFEAPPGIELPLLGDLVVCAAVVKQEAIDQNKPLNAHWAHMVVHGCLHLLGYDHIEDIEAEEMESLETQLIESLGYNNPYQEQ.

3 residues coordinate Zn(2+): H117, H121, and H127.

The protein belongs to the endoribonuclease YbeY family. Zn(2+) is required as a cofactor.

Its subcellular location is the cytoplasm. In terms of biological role, single strand-specific metallo-endoribonuclease involved in late-stage 70S ribosome quality control and in maturation of the 3' terminus of the 16S rRNA. The protein is Endoribonuclease YbeY of Shewanella piezotolerans (strain WP3 / JCM 13877).